The following is a 119-amino-acid chain: MARFVVAALLVLLCLSGLEAIQHAPKIQVYSRHPAENGKPNFLNCYVSGFHPSDIEVDLLKNGKKIEKVEHSDLSFSKDWSFYLLYYTEFTPNEKDEYACRVSHVTFPTPKTVKWDRNM.

A signal peptide spans 1 to 20 (MARFVVAALLVLLCLSGLEA). One can recognise an Ig-like C1-type domain in the interval 25-114 (PKIQVYSRHP…VTFPTPKTVK (90 aa)). The cysteines at positions 45 and 100 are disulfide-linked.

The protein belongs to the beta-2-microglobulin family. As to quaternary structure, heterodimer of an alpha chain and a beta chain. Beta-2-microglobulin is the beta-chain of major histocompatibility complex class I molecules.

It localises to the secreted. In terms of biological role, component of the class I major histocompatibility complex (MHC). Involved in the presentation of peptide antigens to the immune system. This chain is Beta-2-microglobulin (B2M), found in Cebus albifrons (White-fronted capuchin).